A 762-amino-acid chain; its full sequence is Serine/threonine-protein kinase PLK4 (762 aa).

The region spanning 14-268 (YEVQHLLGKG…LEQVLRHPFM (255 aa)) is the Protein kinase domain. ATP-binding positions include 20–28 (LGKGGFACV) and K43. The active-site Proton acceptor is the D139. Residues 383 to 498 (AECISMPPLN…ARFVSLVKSK (116 aa)) enclose the Cryptic POLO box 1 (CPB1) domain. The Cryptic POLO box 2 (CPB2) domain occupies 499–602 (TPKVTYFSGL…GRRPTPEVMP (104 aa)). A POLO box domain is found at 657 to 736 (PIKRLNVPGV…LPQVQMKLKS (80 aa)).

It belongs to the protein kinase superfamily. Ser/Thr protein kinase family. CDC5/Polo subfamily. As to quaternary structure, homodimer. In terms of processing, ubiquitinated by the SCF(Slimb) ubiquitin ligase complex; leading to its degradation by the proteasome during interphase and regulating centriole number and ensuring the block to centriole reduplication.

Its subcellular location is the cytoplasm. It localises to the cytoskeleton. The protein localises to the microtubule organizing center. The protein resides in the centrosome. It is found in the centriole. It catalyses the reaction L-seryl-[protein] + ATP = O-phospho-L-seryl-[protein] + ADP + H(+). The catalysed reaction is L-threonyl-[protein] + ATP = O-phospho-L-threonyl-[protein] + ADP + H(+). Its function is as follows. Serine/threonine-protein kinase that plays a central role in centriole duplication. Able to trigger procentriole formation on the surface of the mother centriole cylinder, using mother centriole as a platform, leading to the recruitment of centriole biogenesis proteins such as sas-6. When overexpressed, it is able to induce centrosome amplification through the simultaneous generation of multiple procentrioles adjoining each parental centriole during S phase. Centrosome amplification following overexpression can initiate tumorigenesis, highlighting the importance of centrosome regulation in cancers. This chain is Serine/threonine-protein kinase PLK4 (SAK), found in Drosophila grimshawi (Hawaiian fruit fly).